Consider the following 667-residue polypeptide: Beta-galactosidase LacZ (667 aa).

Position 109 (arginine 109) interacts with substrate. Residue cysteine 113 participates in Zn(2+) binding. Asparagine 147 is a substrate binding site. Glutamate 148 (proton donor) is an active-site residue. Residues cysteine 153, cysteine 155, and cysteine 158 each coordinate Zn(2+). Catalysis depends on glutamate 307, which acts as the Nucleophile. Substrate contacts are provided by residues tryptophan 315 and 355–358; that span reads EKFH.

Belongs to the glycosyl hydrolase 42 family.

The catalysed reaction is Hydrolysis of terminal non-reducing beta-D-galactose residues in beta-D-galactosides.. In terms of biological role, catalyzes the hydrolysis of lactose to its constituent monosaccharides glucose and galactose. The chain is Beta-galactosidase LacZ from Lactobacillus acidophilus (strain ATCC 700396 / NCK56 / N2 / NCFM).